We begin with the raw amino-acid sequence, 541 residues long: MARQEQQQHLQVLSALDAAKTQWYHFTAIVVAGMGFFTDAYDLFCISLVTKLLGRIYYTDLAKENPGSLPPNVAAAVNGVAFCGTLAGQLFFGWLGDKLGRKSVYGMTLLMMVICSIASGLSFSHTPTSVMATLCFFRFWLGFGIGGDYPLSATIMSEYANKKTRGAFIAAVFAMQGFGILAGGIVTLIISSAFRAGFPAPAYQDDRAGSTVRQADYVWRIILMLGAMPALLTYYWRMKMPETARYTALVAKNAKQAAADMSKVLQVEIQEEQDKLEQMVTRNSSSFGLFSRQFARRHGLHLVGTATTWFLLDIAFYSQNLFQKDIFTSINWIPKAKTMSALEEVFRIARAQTLIALCGTVPGYWFTVFLIDIVGRFAIQLLGFFMMTVFMLGLAVPYHHWTTKGNHIGFVVMYAFTFFFANFGPNSTTFIVPAEIFPARLRSTCHGISAAAGKAGAIIGSFGFLYAAQDPHKPDAGYKPGIGVRNSLFVLAGCNLLGFICTFLVPESKGKSLEEMSGEAEDDDDEVAAAGGGAAVRPQTA.

Over 1–28 the chain is Cytoplasmic; it reads MARQEQQQHLQVLSALDAAKTQWYHFTA. A helical transmembrane segment spans residues 29-49; that stretch reads IVVAGMGFFTDAYDLFCISLV. The Extracellular portion of the chain corresponds to 50–74; the sequence is TKLLGRIYYTDLAKENPGSLPPNVA. Residues 75 to 95 traverse the membrane as a helical segment; the sequence is AAVNGVAFCGTLAGQLFFGWL. Topologically, residues 96-102 are cytoplasmic; the sequence is GDKLGRK. The helical transmembrane segment at 103-123 threads the bilayer; sequence SVYGMTLLMMVICSIASGLSF. The Extracellular portion of the chain corresponds to 124 to 126; sequence SHT. Residues 127–147 form a helical membrane-spanning segment; that stretch reads PTSVMATLCFFRFWLGFGIGG. The Cytoplasmic portion of the chain corresponds to 148–168; sequence DYPLSATIMSEYANKKTRGAF. The helical transmembrane segment at 169–189 threads the bilayer; it reads IAAVFAMQGFGILAGGIVTLI. Over 190-215 the chain is Extracellular; sequence ISSAFRAGFPAPAYQDDRAGSTVRQA. The helical transmembrane segment at 216 to 236 threads the bilayer; the sequence is DYVWRIILMLGAMPALLTYYW. Residues 237–297 lie on the Cytoplasmic side of the membrane; sequence RMKMPETARY…GLFSRQFARR (61 aa). The helical transmembrane segment at 298–318 threads the bilayer; the sequence is HGLHLVGTATTWFLLDIAFYS. At 319–353 the chain is on the extracellular side; it reads QNLFQKDIFTSINWIPKAKTMSALEEVFRIARAQT. The chain crosses the membrane as a helical span at residues 354–374; the sequence is LIALCGTVPGYWFTVFLIDIV. The Cytoplasmic portion of the chain corresponds to 375 to 376; that stretch reads GR. The chain crosses the membrane as a helical span at residues 377-397; that stretch reads FAIQLLGFFMMTVFMLGLAVP. Over 398–404 the chain is Extracellular; that stretch reads YHHWTTK. Residues 405-425 form a helical membrane-spanning segment; the sequence is GNHIGFVVMYAFTFFFANFGP. At 426–447 the chain is on the cytoplasmic side; that stretch reads NSTTFIVPAEIFPARLRSTCHG. The helical transmembrane segment at 448–468 threads the bilayer; that stretch reads ISAAAGKAGAIIGSFGFLYAA. Residues 469–486 lie on the Extracellular side of the membrane; that stretch reads QDPHKPDAGYKPGIGVRN. Residues 487-507 form a helical membrane-spanning segment; the sequence is SLFVLAGCNLLGFICTFLVPE. The Cytoplasmic segment spans residues 508–541; the sequence is SKGKSLEEMSGEAEDDDDEVAAAGGGAAVRPQTA. The interval 514–541 is disordered; that stretch reads EEMSGEAEDDDDEVAAAGGGAAVRPQTA. Positions 516-527 are enriched in acidic residues; that stretch reads MSGEAEDDDDEV.

It belongs to the major facilitator superfamily. Phosphate:H(+) symporter (TC 2.A.1.9) family.

It localises to the membrane. Its function is as follows. High-affinity transporter for external inorganic phosphate. The chain is Probable inorganic phosphate transporter 1-8 (PHT1-8) from Oryza sativa subsp. japonica (Rice).